The following is a 253-amino-acid chain: U1 small nuclear ribonucleoprotein A (253 aa).

Residues Val23 to Thr102 form the RRM 1 domain. Residues Asp111–Ser140 form a disordered region. In terms of domain architecture, RRM 2 spans Asn179–Lys253.

The protein belongs to the RRM U1 A/B'' family. As to quaternary structure, component of the spliceosome where it is associated with snRNP U1.

It is found in the nucleus. It localises to the nucleolus. Its function is as follows. Involved in nuclear pre-mRNA splicing. The chain is U1 small nuclear ribonucleoprotein A from Oryza sativa subsp. indica (Rice).